The following is a 216-amino-acid chain: U1 small nuclear ribonucleoprotein C (216 aa).

The Matrin-type zinc finger occupies 4-36 (FFCDYCDVYLTHDSMSVRKAHNSGRNHLRNVVD). 2 disordered regions span residues 70 to 89 (PQNQ…PGAG) and 125 to 216 (PGGI…ADKR). 2 stretches are compositionally biased toward pro residues: residues 140–149 (PPMPPFPGMP) and 157–204 (GVPP…PPFG).

Belongs to the U1 small nuclear ribonucleoprotein C family. In terms of assembly, U1 snRNP is composed of the 7 core Sm proteins B/B', D1, D2, D3, E, F and G that assemble in a heptameric protein ring on the Sm site of the small nuclear RNA to form the core snRNP, and at least 3 U1 snRNP-specific proteins U1-70K, U1-A and U1-C. U1-C interacts with U1 snRNA and the 5' splice-site region of the pre-mRNA.

Its subcellular location is the nucleus. In terms of biological role, component of the spliceosomal U1 snRNP, which is essential for recognition of the pre-mRNA 5' splice-site and the subsequent assembly of the spliceosome. U1-C is directly involved in initial 5' splice-site recognition for both constitutive and regulated alternative splicing. The interaction with the 5' splice-site seems to precede base-pairing between the pre-mRNA and the U1 snRNA. Stimulates commitment or early (E) complex formation by stabilizing the base pairing of the 5' end of the U1 snRNA and the 5' splice-site region. In Neurospora crassa (strain ATCC 24698 / 74-OR23-1A / CBS 708.71 / DSM 1257 / FGSC 987), this protein is U1 small nuclear ribonucleoprotein C.